A 417-amino-acid chain; its full sequence is MTELRSERKNGNWDRLFGPFFESWAVFKAPQAKSRHIIAYWTRDQLKALGFYMNSEQRRLPRIVAWQYFVSIQLATALASLFYGISESIGDIVNLGRDLVFIITIIFICFRLVFFAQYAGELDVIIDALEDIYHWSIKGPATKEVQETKRLHFLLFMALIITWFSFLILFMLIKISTPFWIESQTLPFHVSWPFQLHDPSKHPIAYIIIFVSQSTTMLYFLIWLGVVENMGVSLFFELTSALRVLCIELRNLQELCLGDEDMLYRELCRMTKFHQQIILLTDRCNHIFNGAFIMQMLINFLLVSLSLFEVLAAKKNPQVAVEYMIIMLMTLGHLSFWSKFGDMFSKESEQVALAVYEAYDPNVGSKSIHRQFCFFIQRAQKPLIMKASPFPPFNLENYMFILKQCYSILTILANTLE.

At 1–62 (MTELRSERKN…MNSEQRRLPR (62 aa)) the chain is on the cytoplasmic side. A helical transmembrane segment spans residues 63 to 83 (IVAWQYFVSIQLATALASLFY). The Extracellular portion of the chain corresponds to 84–98 (GISESIGDIVNLGRD). The helical transmembrane segment at 99–119 (LVFIITIIFICFRLVFFAQYA) threads the bilayer. Residues 120–152 (GELDVIIDALEDIYHWSIKGPATKEVQETKRLH) are Cytoplasmic-facing. The chain crosses the membrane as a helical span at residues 153-173 (FLLFMALIITWFSFLILFMLI). Residues 174–206 (KISTPFWIESQTLPFHVSWPFQLHDPSKHPIAY) lie on the Extracellular side of the membrane. The chain crosses the membrane as a helical span at residues 207-227 (IIIFVSQSTTMLYFLIWLGVV). Residues 228 to 290 (ENMGVSLFFE…TDRCNHIFNG (63 aa)) are Cytoplasmic-facing. Residues 291–311 (AFIMQMLINFLLVSLSLFEVL) traverse the membrane as a helical segment. Over 312–316 (AAKKN) the chain is Extracellular. Residues 317–337 (PQVAVEYMIIMLMTLGHLSFW) form a helical membrane-spanning segment. Residues 338–393 (SKFGDMFSKESEQVALAVYEAYDPNVGSKSIHRQFCFFIQRAQKPLIMKASPFPPF) are Cytoplasmic-facing. Residues 394 to 414 (NLENYMFILKQCYSILTILAN) traverse the membrane as a helical segment. The Extracellular portion of the chain corresponds to 415–417 (TLE).

The protein belongs to the insect chemoreceptor superfamily. Heteromeric odorant receptor channel (TC 1.A.69) family. Or49a subfamily. In terms of assembly, interacts with Orco. Complexes exist early in the endomembrane system in olfactory sensory neurons (OSNs), coupling these complexes to the conserved ciliary trafficking pathway. In terms of tissue distribution, expressed in olfactory sensory neurons in the antenna.

It localises to the cell membrane. In terms of biological role, odorant receptor which mediates acceptance or avoidance behavior, depending on its substrates. The odorant receptor repertoire encodes a large collection of odor stimuli that vary widely in identity, intensity, and duration. May form a complex with Orco to form odorant-sensing units, providing sensitive and prolonged odorant signaling and calcium permeability. Involved in olfactory communication for modulating aggression through the sensing of the male-specific pheromone 11-cis-vaccenyl acetate (cVA). Although acute exposure to cVA elicites aggression through Or67d olfactory receptor neurons (ORNs), chronic cVA exposure reduces aggression through Or65a ORNs. Moreover, cVA leads to generalized learning with mated females. It is a major component of the male cuticular hydrocarbon profile, but it is not found on virgin females. During copulation, cVA is transferred to the female in ejaculate along with sperm and peptides that decrease her sexual receptivity. This chain is Odorant receptor 65a (Or65a), found in Drosophila melanogaster (Fruit fly).